Reading from the N-terminus, the 303-residue chain is UDP-3-O-acyl-N-acetylglucosamine deacetylase (303 aa).

Residues histidine 78, histidine 237, and aspartate 241 each contribute to the Zn(2+) site. The Proton donor role is filled by histidine 264.

This sequence belongs to the LpxC family. Zn(2+) is required as a cofactor.

It carries out the reaction a UDP-3-O-[(3R)-3-hydroxyacyl]-N-acetyl-alpha-D-glucosamine + H2O = a UDP-3-O-[(3R)-3-hydroxyacyl]-alpha-D-glucosamine + acetate. The protein operates within glycolipid biosynthesis; lipid IV(A) biosynthesis; lipid IV(A) from (3R)-3-hydroxytetradecanoyl-[acyl-carrier-protein] and UDP-N-acetyl-alpha-D-glucosamine: step 2/6. Its function is as follows. Catalyzes the hydrolysis of UDP-3-O-myristoyl-N-acetylglucosamine to form UDP-3-O-myristoylglucosamine and acetate, the committed step in lipid A biosynthesis. The protein is UDP-3-O-acyl-N-acetylglucosamine deacetylase of Pseudomonas fluorescens (strain ATCC BAA-477 / NRRL B-23932 / Pf-5).